Here is a 66-residue protein sequence, read N- to C-terminus: Large ribosomal subunit protein bL31 (66 aa).

Zn(2+) is bound by residues Cys16, Cys18, Cys36, and Cys39.

Belongs to the bacterial ribosomal protein bL31 family. Type A subfamily. As to quaternary structure, part of the 50S ribosomal subunit. Zn(2+) is required as a cofactor.

Its function is as follows. Binds the 23S rRNA. The sequence is that of Large ribosomal subunit protein bL31 from Campylobacter hominis (strain ATCC BAA-381 / DSM 21671 / CCUG 45161 / LMG 19568 / NCTC 13146 / CH001A).